The following is a 134-amino-acid chain: MAATMKKAAAEDVNVTFEDQQKINKFARNTSRITELKEEIEVKKKQLQNLEDACDDIMLADDDCLMIPYQIGDVFISHSQEETQEMLEEAKKNLQEEIDALESRVESIQRVLADLKVQLYAKFGSNINLEADES.

An N-acetylalanine modification is found at Ala2. The residue at position 125 (Ser125) is a Phosphoserine.

This sequence belongs to the prefoldin subunit beta family. In terms of assembly, heterohexamer of two PFD-alpha type and four PFD-beta type subunits. Interacts with URI1; the interaction is phosphorylation-dependent and occurs in a growth-dependent manner.

It is found in the nucleus. Its subcellular location is the cytoplasm. It localises to the mitochondrion. In terms of biological role, binds specifically to cytosolic chaperonin (c-CPN) and transfers target proteins to it. Binds to nascent polypeptide chain and promotes folding in an environment in which there are many competing pathways for nonnative proteins. The chain is Prefoldin subunit 4 (PFDN4) from Homo sapiens (Human).